The following is a 182-amino-acid chain: Pyruvoyl-dependent arginine decarboxylase (182 aa).

The residue at position 44 (Ser-44) is a Pyruvic acid (Ser).

This sequence belongs to the PdaD family. The cofactor is pyruvate.

The enzyme catalyses L-arginine + H(+) = agmatine + CO2. This chain is Pyruvoyl-dependent arginine decarboxylase, found in Picrophilus torridus (strain ATCC 700027 / DSM 9790 / JCM 10055 / NBRC 100828 / KAW 2/3).